Reading from the N-terminus, the 297-residue chain is Probable endonuclease 4 (297 aa).

His-69, His-110, Glu-145, Asp-179, His-182, His-214, Asp-227, His-229, and Glu-259 together coordinate Zn(2+).

Belongs to the AP endonuclease 2 family. Zn(2+) serves as cofactor.

The enzyme catalyses Endonucleolytic cleavage to 5'-phosphooligonucleotide end-products.. Endonuclease IV plays a role in DNA repair. It cleaves phosphodiester bonds at apurinic or apyrimidinic (AP) sites, generating a 3'-hydroxyl group and a 5'-terminal sugar phosphate. The protein is Probable endonuclease 4 of Listeria welshimeri serovar 6b (strain ATCC 35897 / DSM 20650 / CCUG 15529 / CIP 8149 / NCTC 11857 / SLCC 5334 / V8).